We begin with the raw amino-acid sequence, 223 residues long: Phosphoribosylformylglycinamidine synthase subunit PurQ (223 aa).

A Glutamine amidotransferase type-1 domain is found at 4 to 223 (KIGVITFPGT…FLSAIGTIAA (220 aa)). The Nucleophile role is filled by Cys-87. Catalysis depends on residues His-195 and Glu-197.

In terms of assembly, part of the FGAM synthase complex composed of 1 PurL, 1 PurQ and 2 PurS subunits.

It localises to the cytoplasm. The enzyme catalyses N(2)-formyl-N(1)-(5-phospho-beta-D-ribosyl)glycinamide + L-glutamine + ATP + H2O = 2-formamido-N(1)-(5-O-phospho-beta-D-ribosyl)acetamidine + L-glutamate + ADP + phosphate + H(+). It catalyses the reaction L-glutamine + H2O = L-glutamate + NH4(+). The protein operates within purine metabolism; IMP biosynthesis via de novo pathway; 5-amino-1-(5-phospho-D-ribosyl)imidazole from N(2)-formyl-N(1)-(5-phospho-D-ribosyl)glycinamide: step 1/2. Part of the phosphoribosylformylglycinamidine synthase complex involved in the purines biosynthetic pathway. Catalyzes the ATP-dependent conversion of formylglycinamide ribonucleotide (FGAR) and glutamine to yield formylglycinamidine ribonucleotide (FGAM) and glutamate. The FGAM synthase complex is composed of three subunits. PurQ produces an ammonia molecule by converting glutamine to glutamate. PurL transfers the ammonia molecule to FGAR to form FGAM in an ATP-dependent manner. PurS interacts with PurQ and PurL and is thought to assist in the transfer of the ammonia molecule from PurQ to PurL. The polypeptide is Phosphoribosylformylglycinamidine synthase subunit PurQ (Corynebacterium efficiens (strain DSM 44549 / YS-314 / AJ 12310 / JCM 11189 / NBRC 100395)).